Reading from the N-terminus, the 45-residue chain is Osteocalcin (45 aa).

The Gla domain occupies 1-41 (AAGELTLTQLESLREVCEANLACEDMMDAQGIIAAYTAYYG). 4 residues coordinate Ca(2+): Glu11, Glu15, Glu18, and Glu24. A 4-carboxyglutamate mark is found at Glu11, Glu15, and Glu18. Cys17 and Cys23 form a disulfide bridge.

This sequence belongs to the osteocalcin/matrix Gla protein family. Post-translationally, gamma-carboxyglutamate residues are formed by vitamin K dependent carboxylation by GGCX. These residues are essential for the binding of calcium. Also found in smaller quantities in dentin.

The protein resides in the secreted. In terms of biological role, the carboxylated form is one of the main organic components of the bone matrix, which constitutes 1-2% of the total bone protein. The carboxylated form binds strongly to apatite and calcium. In Lepomis macrochirus (Bluegill), this protein is Osteocalcin (bglap).